The chain runs to 117 residues: MMTEFGSAMTLVTGLVAYGAYVKSKRQSNHYLLKTNNNFDVEKENFNYNNNNNNNNNNNNNNSNNNDNNNNNNSNSNNNNNNNNNNNNNNNNNINDKQINGTNIFDSNNQIKRRLFD.

The signal sequence occupies residues 1-24 (MMTEFGSAMTLVTGLVAYGAYVKS). Residues 42–117 (EKENFNYNNN…NNQIKRRLFD (76 aa)) are disordered. The span at 46–95 (FNYNNNNNNNNNNNNNNSNNNDNNNNNNSNSNNNNNNNNNNNNNNNNNIN) shows a compositional bias: low complexity. Residues Asn-61 and Asn-72 are each glycosylated (N-linked (GlcNAc...) asparagine). A compositionally biased stretch (polar residues) spans 96–110 (DKQINGTNIFDSNNQ).

Its subcellular location is the secreted. This is an uncharacterized protein from Dictyostelium discoideum (Social amoeba).